Consider the following 511-residue polypeptide: Trafficking protein particle complex subunit 13 homolog (511 aa).

The protein belongs to the TRAPPC13 family.

The chain is Trafficking protein particle complex subunit 13 homolog from Dictyostelium discoideum (Social amoeba).